The sequence spans 714 residues: Ribonucleoside-diphosphate reductase 2 subunit alpha (714 aa).

Substrate contacts are provided by residues Thr-161, 177-178, Gly-206, 386-390, and 588-592; these read SC, NLCSE, and PTGSI. A disulfide bond links Cys-178 and Cys-415. Asn-386 acts as the Proton acceptor in catalysis. Catalysis depends on Cys-388, which acts as the Cysteine radical intermediate. The active-site Proton acceptor is the Glu-390.

This sequence belongs to the ribonucleoside diphosphate reductase large chain family. In terms of assembly, tetramer of two alpha and two beta subunits.

The catalysed reaction is a 2'-deoxyribonucleoside 5'-diphosphate + [thioredoxin]-disulfide + H2O = a ribonucleoside 5'-diphosphate + [thioredoxin]-dithiol. Under complex allosteric control mediated by deoxynucleoside triphosphates and ATP binding. The type of nucleotide bound at the specificity site determines substrate preference. It seems probable that ATP makes the enzyme reduce CDP and UDP, dGTP favors ADP reduction and dTTP favors GDP reduction. Lacks the N-terminal activity site. Provides the precursors necessary for DNA synthesis. Catalyzes the biosynthesis of deoxyribonucleotides from the corresponding ribonucleotides. R1E contains the binding sites for both substrates and allosteric effectors and carries out the actual reduction of the ribonucleotide. The protein is Ribonucleoside-diphosphate reductase 2 subunit alpha (nrdE) of Salmonella typhimurium (strain LT2 / SGSC1412 / ATCC 700720).